A 395-amino-acid chain; its full sequence is Protein NDRG1 (395 aa).

The tract at residues 325–395 is disordered; it reads RSRTGSAASS…NTPKSMEISC (71 aa). Positions 326–339 are enriched in low complexity; the sequence is SRTGSAASSSSQDG. Tandem repeats lie at residues 339–348, 349–358, 359–368, and 369–378. Positions 339 to 378 are 4 X 10 AA tandem repeats of G-[NS]-R-S-R-[AS]-H-T-[DGN]-[DES]; the sequence is GNRSRSHTNEGSRSRSHTGDGNRSRAHTGDGNRSRSHTDS. Basic and acidic residues predominate over residues 345–376; sequence HTNEGSRSRSHTGDGNRSRAHTGDGNRSRSHT. Residues 377-389 are compositionally biased toward polar residues; it reads DSNNTNSEHNTPK.

The protein belongs to the NDRG family.

In terms of biological role, may be involved in pronephros development, after specification of the pronephros. The protein is Protein NDRG1 of Xenopus tropicalis (Western clawed frog).